The primary structure comprises 175 residues: Gamma-crystallin B (175 aa).

2 Beta/gamma crystallin 'Greek key' domains span residues 2–40 and 41–83; these read GKIT…RVDS and GCWM…RLIP. A connecting peptide region spans residues 84-88; sequence QHSGT. Beta/gamma crystallin 'Greek key' domains follow at residues 89–129 and 130–172; these read YRMR…NVME and GCWV…RRVM.

This sequence belongs to the beta/gamma-crystallin family.

In terms of biological role, crystallins are the dominant structural components of the vertebrate eye lens. This is Gamma-crystallin B (Crygb) from Rattus norvegicus (Rat).